The primary structure comprises 445 residues: MRVKVLSRNPDDYVRETKLDLQRVPRNYDPALHPFEVAREYVRALNATKLERVFAKPFLSSLDGHRDGVNCMAKHPKSLSTVLSGACDGEVRIWNLTKRQCIRALQAHEGFVRGMCARFCGTSFFTVGDDKTVKQWKMESPGYGEEEEPIHTILGKTVYTGIDHHWKDAVFATCGQQVDIWDEQRTSPMCSLTWGFDSISSVKFNPIETYLLGSCASDRNIVLYDMRQSTPLKKVILNMRTNTLCWNPMEAFIFTAANEDYNLYTFDMRFLTSPVMVHMDHVSAVLDVDYSPTGKEFVSASFDKSVRIFPVDKGHSREVYHTKRMQHVITVKWTSDSRYILCGSDEMNIRLWKANASEKLGVLAPREKAAMNYNQKLKEKFQHHPQIKRIARHRHLPKSIYCQIKEQRIMREARRRKELNRRKHSKPGSVPVVSEKKKHIVAVVQ.

7 WD repeats span residues 64 to 104 (GHRD…CIRA), 107 to 146 (AHEG…YGEE), 149 to 191 (PIHT…PMCS), 194 to 234 (WGFD…PLKK), 236 to 276 (ILNM…SPVM), 280 to 321 (DHVS…EVYH), and 323 to 362 (KRMQ…KLGV). Positions 353–441 (KANASEKLGV…VVSEKKKHIV (89 aa)) are required for nucleolar location.

The protein belongs to the WD repeat DCAF13/WDSOF1 family. In terms of assembly, part of the small subunit (SSU) processome, composed of more than 70 proteins and the RNA chaperone small nucleolar RNA (snoRNA) U3. Component of the DCX(DCAF13) E3 ubiquitin ligase complex, at least composed of CUL4 (CUL4A or CUL4B), DDB1, DCAF13 and RBX1.

The protein resides in the nucleus. The protein localises to the nucleolus. It functions in the pathway protein modification; protein ubiquitination. In terms of biological role, part of the small subunit (SSU) processome, first precursor of the small eukaryotic ribosomal subunit. During the assembly of the SSU processome in the nucleolus, many ribosome biogenesis factors, an RNA chaperone and ribosomal proteins associate with the nascent pre-rRNA and work in concert to generate RNA folding, modifications, rearrangements and cleavage as well as targeted degradation of pre-ribosomal RNA by the RNA exosome. Its function is as follows. Substrate-recognition component of a DCX (DDB1-CUL4-X-box) E3 ubiquitin-protein ligase complex. This chain is DDB1- and CUL4-associated factor 13 (DCAF13), found in Gallus gallus (Chicken).